We begin with the raw amino-acid sequence, 303 residues long: Acetaldehyde dehydrogenase 1 (303 aa).

Residue Cys130 is the Acyl-thioester intermediate of the active site. Residues 161 to 169 and Asn272 contribute to the NAD(+) site; that span reads SVGPGTRKN.

This sequence belongs to the acetaldehyde dehydrogenase family.

It catalyses the reaction acetaldehyde + NAD(+) + CoA = acetyl-CoA + NADH + H(+). This Methylibium petroleiphilum (strain ATCC BAA-1232 / LMG 22953 / PM1) protein is Acetaldehyde dehydrogenase 1.